The following is a 165-amino-acid chain: Coatomer subunit zeta (165 aa).

This sequence belongs to the adaptor complexes small subunit family. Oligomeric complex that consists of at least the alpha, beta, beta', gamma, delta, epsilon and zeta subunits.

It localises to the cytoplasm. It is found in the golgi apparatus membrane. Its subcellular location is the cytoplasmic vesicle. The protein resides in the COPI-coated vesicle membrane. Its function is as follows. The coatomer is a cytosolic protein complex that binds to dilysine motifs and reversibly associates with Golgi non-clathrin-coated vesicles, which further mediate biosynthetic protein transport from the ER, via the Golgi up to the trans Golgi network. Coatomer complex is required for budding from Golgi membranes, and is essential for the retrograde Golgi-to-ER transport of dilysine-tagged proteins. The zeta subunit may be involved in regulating the coat assembly and, hence, the rate of biosynthetic protein transport due to its association-dissociation properties with the coatomer complex. In Encephalitozoon cuniculi (strain GB-M1) (Microsporidian parasite), this protein is Coatomer subunit zeta.